A 360-amino-acid chain; its full sequence is Peptide chain release factor 1 (360 aa).

Gln-234 is subject to N5-methylglutamine.

This sequence belongs to the prokaryotic/mitochondrial release factor family. In terms of processing, methylated by PrmC. Methylation increases the termination efficiency of RF1.

Its subcellular location is the cytoplasm. Functionally, peptide chain release factor 1 directs the termination of translation in response to the peptide chain termination codons UAG and UAA. This is Peptide chain release factor 1 from Clostridium botulinum (strain Alaska E43 / Type E3).